A 103-amino-acid chain; its full sequence is Large ribosomal subunit protein uL24 (103 aa).

Belongs to the universal ribosomal protein uL24 family. As to quaternary structure, part of the 50S ribosomal subunit.

Its function is as follows. One of two assembly initiator proteins, it binds directly to the 5'-end of the 23S rRNA, where it nucleates assembly of the 50S subunit. Functionally, one of the proteins that surrounds the polypeptide exit tunnel on the outside of the subunit. The polypeptide is Large ribosomal subunit protein uL24 (Actinobacillus pleuropneumoniae serotype 3 (strain JL03)).